We begin with the raw amino-acid sequence, 488 residues long: Probable metabolite transport protein YBR241C (488 aa).

Residues 1 to 18 (MAETERLMPNGGSRETKP) lie on the Cytoplasmic side of the membrane. Residues 19–39 (LITGHLILGTIVACLGSIQYG) form a helical membrane-spanning segment. At 40-87 (YHIAELNAPQEFLSCSRFEAPDENISYDDTWVGQHGLKQCIALTDSQY) the chain is on the vacuolar side. Asparagine 63 is a glycosylation site (N-linked (GlcNAc...) asparagine). A helical transmembrane segment spans residues 88–108 (GAITSIFSIGGLFGSYYAGNW). The Cytoplasmic portion of the chain corresponds to 109-121 (ANRYGRKYVSMGA). Residues 122–142 (SAMCMVSSLLLFFSNSYLQLL) traverse the membrane as a helical segment. The Vacuolar portion of the chain corresponds to 143 to 146 (FGRF). The chain crosses the membrane as a helical span at residues 147–167 (LVGMSCGTAIVITPLFINEIA). Over 168–178 (PVEWRGAMGSM) the chain is Cytoplasmic. Residues 179–198 (NQVSINLGILLTQTLALKYA) traverse the membrane as a helical segment. Residues 199 to 204 (DSYNWR) lie on the Vacuolar side of the membrane. The chain crosses the membrane as a helical span at residues 205 to 225 (WLLFSGSVIAVANILAWLKVD). The Cytoplasmic portion of the chain corresponds to 226-299 (ESPRWLVSHG…DPSYKKPRTV (74 aa)). The segment covering 258–279 (EIQDWQRSHGHNRDPESSEETH) has biased composition (basic and acidic residues). The segment at 258-281 (EIQDWQRSHGHNRDPESSEETHSG) is disordered. Residues 300 to 320 (ILAILSCQQFCGINSIIFYGV) form a helical membrane-spanning segment. The Vacuolar portion of the chain corresponds to 321–322 (KV). Residues 323–337 (IGKILPDYSIQVNFA) traverse the membrane as a helical segment. Over 338 to 344 (ISILNVV) the chain is Cytoplasmic. Residues 345–364 (VTLAASAIIDHVGRRPLLLA) form a helical membrane-spanning segment. Residues 365-390 (STTVMTAMSLLISVGLTLSVSFLLVT) are Vacuolar-facing. The chain crosses the membrane as a helical span at residues 391–411 (ATFVYIAAFAIGLGPIPFLII). The Cytoplasmic portion of the chain corresponds to 412–419 (GELSYPQD). Residues 420–442 (AATAQSFGTVCNWLATFIVGYLF) traverse the membrane as a helical segment. Over 443 to 446 (PIGH) the chain is Vacuolar. A helical membrane pass occupies residues 447 to 463 (GLMGGYVFAIFAAIAAM). Residues 464–488 (FATYVYKRVPETKGKTTYSEVWAGY) are Cytoplasmic-facing.

Belongs to the major facilitator superfamily. Sugar transporter (TC 2.A.1.1) family.

The protein resides in the vacuole membrane. The chain is Probable metabolite transport protein YBR241C from Saccharomyces cerevisiae (strain ATCC 204508 / S288c) (Baker's yeast).